The chain runs to 245 residues: Ubiquinone/menaquinone biosynthesis C-methyltransferase UbiE (245 aa).

Residues T71, D92, and 118–119 (DA) each bind S-adenosyl-L-methionine.

It belongs to the class I-like SAM-binding methyltransferase superfamily. MenG/UbiE family.

It catalyses the reaction a 2-demethylmenaquinol + S-adenosyl-L-methionine = a menaquinol + S-adenosyl-L-homocysteine + H(+). The catalysed reaction is a 2-methoxy-6-(all-trans-polyprenyl)benzene-1,4-diol + S-adenosyl-L-methionine = a 5-methoxy-2-methyl-3-(all-trans-polyprenyl)benzene-1,4-diol + S-adenosyl-L-homocysteine + H(+). The protein operates within quinol/quinone metabolism; menaquinone biosynthesis; menaquinol from 1,4-dihydroxy-2-naphthoate: step 2/2. Its pathway is cofactor biosynthesis; ubiquinone biosynthesis. Functionally, methyltransferase required for the conversion of demethylmenaquinol (DMKH2) to menaquinol (MKH2) and the conversion of 2-polyprenyl-6-methoxy-1,4-benzoquinol (DDMQH2) to 2-polyprenyl-3-methyl-6-methoxy-1,4-benzoquinol (DMQH2). This Neisseria meningitidis serogroup C (strain 053442) protein is Ubiquinone/menaquinone biosynthesis C-methyltransferase UbiE.